Reading from the N-terminus, the 368-residue chain is DNA replication and repair protein RecF (368 aa).

An ATP-binding site is contributed by 30-37 (GRNGQGKT).

It belongs to the RecF family.

It is found in the cytoplasm. Functionally, the RecF protein is involved in DNA metabolism; it is required for DNA replication and normal SOS inducibility. RecF binds preferentially to single-stranded, linear DNA. It also seems to bind ATP. In Trichlorobacter lovleyi (strain ATCC BAA-1151 / DSM 17278 / SZ) (Geobacter lovleyi), this protein is DNA replication and repair protein RecF.